Here is a 1119-residue protein sequence, read N- to C-terminus: DNA-directed RNA polymerase D subunit 2b (1119 aa).

Asp-732 lines the Mg(2+) pocket. Zn(2+) contacts are provided by Cys-1055, Cys-1058, Cys-1080, and Cys-1083. The C4-type zinc-finger motif lies at 1055–1083 (CRKCKTYANVIERTPSSGRKIRGPYCRVC).

The protein belongs to the RNA polymerase beta chain family. As to quaternary structure, component of the RNA polymerase IVa and IVb (Pol IV) complexes.

It is found in the nucleus. The enzyme catalyses RNA(n) + a ribonucleoside 5'-triphosphate = RNA(n+1) + diphosphate. DNA-dependent RNA polymerase catalyzes the transcription of DNA into RNA using the four ribonucleoside triphosphates as substrates. Second largest component of RNA polymerase IVa and IVb which mediate short-interfering RNAs (siRNA) accumulation and subsequent RNA-directed DNA methylation-dependent (RdDM) silencing of endogenous repeated sequences, including transposable largest subunit. Also required for full erasure of methylation elements. Required for intercellular RNA interference (RNAi) leading to systemic post-transcriptional gene silencing. This Arabidopsis thaliana (Mouse-ear cress) protein is DNA-directed RNA polymerase D subunit 2b (NRPD2b).